Here is a 56-residue protein sequence, read N- to C-terminus: Photosystem II reaction center X protein (56 aa).

The chain crosses the membrane as a helical span at residues 27–47 (IGSFLAAGALIVAPAAAALIW).

Belongs to the PsbX family. Type 2 subfamily. In terms of assembly, PSII consists of a core antenna complex that captures photons, and an electron transfer chain that converts photonic excitation into a charge separation. PSII forms dimeric complexes.

It localises to the cellular thylakoid membrane. In terms of biological role, involved in the binding and/or turnover of quinones at the Q(B) site of Photosystem II. This chain is Photosystem II reaction center X protein, found in Prochlorococcus marinus (strain NATL2A).